Consider the following 569-residue polypeptide: MSYKINRKTYAQTYGPTKGDRVRLADTELIIEVEKDFTTYGDEVKFGGGKVIRDGMGQSQVTREDGAVDTVITNALIVDWWGIVKADVGLKDGKIYEIGKAGNPDIQDNINIIIGSSTEVIAGEGHILTAGSIDTHIHFICPQQIETALASGVTTMLGGGTGPATGTNATTCTPGAFHISRMIQSAEAFPVNLGFFGKGNSSNETNLFEQVNAGACGLKLHEDWGTTPSTINSCLNVADTLDVQVCIHTDTLNEAGFVEDTIAAIAGRTIHTFHTEGAGGGHAPDIIKICGENNVLPSSTNPTRPYTKNTLEEHLDMLMVCHHLDSKIPEDIAFAESRIRRETIAAEDILHDIGAFSIIASDSQAMGRVGEVITRTFQTAHKMKVQRGPLPEDSDRNDNYRVKRYISKVTINPAIAHGINRFVGSIEKGKIADLVLWKPSFFGVKPELVVKGGSIVWSQMGDANASIPTPGPVHGRPMFANYGQSLLKSSFTFLSKNAIELDIPNKLSLQKNCLAVENTRSINKLDLKLNNKLPNITVDPQTYEVFADGVLLSCEPLEEVPMAQKYFLL.

The Urease domain occupies 131-569; the sequence is GSIDTHIHFI…VPMAQKYFLL (439 aa). 3 residues coordinate Ni(2+): histidine 136, histidine 138, and lysine 219. At lysine 219 the chain carries N6-carboxylysine. Histidine 221 provides a ligand contact to substrate. The Ni(2+) site is built by histidine 248 and histidine 274. The active-site Proton donor is histidine 322. Aspartate 362 is a binding site for Ni(2+).

Belongs to the metallo-dependent hydrolases superfamily. Urease alpha subunit family. In terms of assembly, heterotrimer of UreA (gamma), UreB (beta) and UreC (alpha) subunits. Two heterotrimers associate to form the active enzyme. In most bacteria it is thought that three heterotrimers form the active enzyme. Requires Ni cation as cofactor. Post-translationally, carboxylation allows a single lysine to coordinate two nickel ions.

The protein localises to the cytoplasm. The enzyme catalyses urea + 2 H2O + H(+) = hydrogencarbonate + 2 NH4(+). Its pathway is nitrogen metabolism; urea degradation; CO(2) and NH(3) from urea (urease route): step 1/1. Inhibited by HgCl2 and acetohydroxyamic acid slightly by EDTA, but not by boric acid or L-methionine-DL-sulfoximine. The polypeptide is Urease subunit alpha (Prochlorococcus marinus subsp. pastoris (strain PCC 9511)).